Reading from the N-terminus, the 192-residue chain is Thiosulfate reductase electron transfer subunit PhsB (192 aa).

3 consecutive 4Fe-4S ferredoxin-type domains span residues 8 to 36 (YVML…VPEG), 55 to 86 (THFQ…RDEN), and 87 to 116 (GIVQ…LNPQ). [4Fe-4S] cluster contacts are provided by C17, C20, C23, C27, C64, C67, C72, C76, C96, C99, C102, C106, C123, C126, C139, and C143.

Composed of three subunits: PhsA, PhsB and PhsC. It depends on [4Fe-4S] cluster as a cofactor.

It is found in the cell inner membrane. Component of the PhsABC thiosulfate reductase that catalyzes the reduction of thiosulfate to sulfite and hydrogen sulfide, with menaquinol as the sole electron donor. Proton motive force (PMF) is required to drive transmembrane electron transfer within the reductase. The PhsB subunit transfers electrons between PhsC and PhsA. This Salmonella typhi protein is Thiosulfate reductase electron transfer subunit PhsB (phsB).